A 384-amino-acid polypeptide reads, in one-letter code: PqqA peptide cyclase (384 aa).

The Radical SAM core domain maps to 5 to 220 (VGLPLWLLAE…TNEYREKLKA (216 aa)). The [4Fe-4S] cluster site is built by Cys-19, Cys-23, and Cys-26.

It belongs to the radical SAM superfamily. PqqE family. As to quaternary structure, interacts with PqqD. The interaction is necessary for activity of PqqE. [4Fe-4S] cluster serves as cofactor.

It carries out the reaction [PQQ precursor protein] + S-adenosyl-L-methionine = E-Y cross-linked-[PQQ precursor protein] + 5'-deoxyadenosine + L-methionine + H(+). It participates in cofactor biosynthesis; pyrroloquinoline quinone biosynthesis. In terms of biological role, catalyzes the cross-linking of a glutamate residue and a tyrosine residue in the PqqA protein as part of the biosynthesis of pyrroloquinoline quinone (PQQ). The polypeptide is PqqA peptide cyclase (Acinetobacter baumannii (strain AB0057)).